The primary structure comprises 168 residues: 3'-5' exoribonuclease MT2234.1 (168 aa).

Asp6 contributes to the Mg(2+) binding site. The segment at 6–9 (DTEF) is RNA binding.

As to quaternary structure, homodimer. It depends on Mg(2+) as a cofactor.

Its function is as follows. Exonuclease that cleaves single-stranded 3' overhangs of double-stranded RNA. This chain is 3'-5' exoribonuclease MT2234.1, found in Mycobacterium tuberculosis (strain CDC 1551 / Oshkosh).